Consider the following 156-residue polypeptide: Small ribosomal subunit protein uS7 (156 aa).

It belongs to the universal ribosomal protein uS7 family. As to quaternary structure, part of the 30S ribosomal subunit. Contacts proteins S9 and S11.

In terms of biological role, one of the primary rRNA binding proteins, it binds directly to 16S rRNA where it nucleates assembly of the head domain of the 30S subunit. Is located at the subunit interface close to the decoding center, probably blocks exit of the E-site tRNA. The chain is Small ribosomal subunit protein uS7 from Jannaschia sp. (strain CCS1).